We begin with the raw amino-acid sequence, 217 residues long: UPF0502 protein AHA_2872 (217 aa).

The protein belongs to the UPF0502 family.

The chain is UPF0502 protein AHA_2872 from Aeromonas hydrophila subsp. hydrophila (strain ATCC 7966 / DSM 30187 / BCRC 13018 / CCUG 14551 / JCM 1027 / KCTC 2358 / NCIMB 9240 / NCTC 8049).